Here is a 937-residue protein sequence, read N- to C-terminus: Chromatin assembly factor 1 subunit A (937 aa).

Residues 21 to 69 are disordered; that stretch reads RLPFKRLNPVPKEKHDAEAEGKKGKCSKSGLGQSKDSSTDTLHASTDNM. Residues 31–43 show a composition bias toward basic and acidic residues; it reads PKEKHDAEAEGKK. The segment covering 59-69 has biased composition (polar residues); the sequence is TDTLHASTDNM. The short motif at 213–226 is the PxVxL motif element; that stretch reads FEGKMPVVLLEDIM. Disordered regions lie at residues 250–386, 574–614, 753–778, 831–851, and 910–937; these read SHEG…EKRK, VDSD…IPHG, GDTS…VPSK, SGKE…TPVS, and TVTE…SNTV. The segment covering 255 to 269 has biased composition (low complexity); it reads SVLTNSSLSSLSVSS. Residues 301–386 show a composition bias toward basic and acidic residues; sequence SSAEKEKLRL…KLRVKEEKRK (86 aa). Composition is skewed to acidic residues over residues 574–586 and 594–608; these read VDSD…EEPG and GDDE…DDDG. Positions 756–766 are enriched in polar residues; sequence SPVSPNTSRPQ.

This sequence belongs to the CHAF1A family. Subunit of the CAF-1 complex that contains RBBP4, CHAF1B and CHAF1A. Interacts with CHAF1B, PCNA and RBBP4.

Its subcellular location is the nucleus. In terms of biological role, acts as a component of the histone chaperone complex chromatin assembly factor 1 (CAF-1), which assembles histone octamers onto DNA during replication and repair. CAF-1 performs the first step of the nucleosome assembly process, bringing newly synthesized histones H3 and H4 to replicating DNA; histones H2A/H2B can bind to this chromatin precursor subsequent to DNA replication to complete the histone octamer. In Gallus gallus (Chicken), this protein is Chromatin assembly factor 1 subunit A (CHAF1A).